Here is a 398-residue protein sequence, read N- to C-terminus: Selenide, water dikinase (398 aa).

Residues 1 to 21 (MSHKRPQSSAGESNGAVDLKT) form a disordered region. The active site involves C46. ATP-binding positions include K49, 72-74 (GMD), D97, D120, and 171-174 (GGQT). A Mg(2+)-binding site is contributed by D74. D120 lines the Mg(2+) pocket. Mg(2+) is bound at residue D278.

The protein belongs to the selenophosphate synthase 1 family. Class I subfamily. Homodimer. Mg(2+) is required as a cofactor.

It carries out the reaction hydrogenselenide + ATP + H2O = selenophosphate + AMP + phosphate + 2 H(+). Its function is as follows. Synthesizes selenophosphate from selenide and ATP. This chain is Selenide, water dikinase, found in Leishmania major.